The sequence spans 150 residues: Large ribosomal subunit protein bL9 (150 aa).

This sequence belongs to the bacterial ribosomal protein bL9 family.

Its function is as follows. Binds to the 23S rRNA. The chain is Large ribosomal subunit protein bL9 from Alcanivorax borkumensis (strain ATCC 700651 / DSM 11573 / NCIMB 13689 / SK2).